Here is a 398-residue protein sequence, read N- to C-terminus: Phosphoglycerate kinase (398 aa).

Substrate contacts are provided by residues D21 to N23, R36, H59 to R62, R119, and R157. ATP-binding positions include K208, G296, E327, and G354–S357.

The protein belongs to the phosphoglycerate kinase family. Monomer.

It localises to the cytoplasm. The enzyme catalyses (2R)-3-phosphoglycerate + ATP = (2R)-3-phospho-glyceroyl phosphate + ADP. The protein operates within carbohydrate degradation; glycolysis; pyruvate from D-glyceraldehyde 3-phosphate: step 2/5. In Streptococcus pyogenes serotype M5 (strain Manfredo), this protein is Phosphoglycerate kinase.